The chain runs to 436 residues: Methylenetetrahydrofolate--tRNA-(uracil-5-)-methyltransferase TrmFO (436 aa).

FAD is bound at residue 10-15; it reads GAGLAG.

Belongs to the MnmG family. TrmFO subfamily. FAD is required as a cofactor.

Its subcellular location is the cytoplasm. It carries out the reaction uridine(54) in tRNA + (6R)-5,10-methylene-5,6,7,8-tetrahydrofolate + NADH + H(+) = 5-methyluridine(54) in tRNA + (6S)-5,6,7,8-tetrahydrofolate + NAD(+). The catalysed reaction is uridine(54) in tRNA + (6R)-5,10-methylene-5,6,7,8-tetrahydrofolate + NADPH + H(+) = 5-methyluridine(54) in tRNA + (6S)-5,6,7,8-tetrahydrofolate + NADP(+). Its function is as follows. Catalyzes the folate-dependent formation of 5-methyl-uridine at position 54 (M-5-U54) in all tRNAs. This Exiguobacterium sp. (strain ATCC BAA-1283 / AT1b) protein is Methylenetetrahydrofolate--tRNA-(uracil-5-)-methyltransferase TrmFO.